The primary structure comprises 297 residues: tRNA uridine(34) hydroxylase (297 aa).

A Rhodanese domain is found at 137-232 (RGDDVVFFDG…YGEKYGDKGL (96 aa)). The active-site Cysteine persulfide intermediate is the Cys192.

The protein belongs to the TrhO family.

It catalyses the reaction uridine(34) in tRNA + AH2 + O2 = 5-hydroxyuridine(34) in tRNA + A + H2O. Catalyzes oxygen-dependent 5-hydroxyuridine (ho5U) modification at position 34 in tRNAs. This is tRNA uridine(34) hydroxylase from Corynebacterium urealyticum (strain ATCC 43042 / DSM 7109).